A 38-amino-acid chain; its full sequence is Mu/omega-theraphotoxin-Mb1a (38 aa).

3 disulfides stabilise this stretch: cysteine 7-cysteine 21, cysteine 14-cysteine 26, and cysteine 20-cysteine 33. Position 38 is a threonine amide (threonine 38).

Belongs to the neurotoxin 10 (Hwtx-1) family. 28 (Jztx-11) subfamily. Expressed by the venom gland.

It is found in the secreted. Its function is as follows. Paralytic toxin that inhibits insect voltage-gated sodium (Nav) and calcium (Cav) channels in P.americana (American cockroach) dorsal unpaired median (DUM) neurons, and inhibits the B.germanica (German cockroach) Nav channel (BgNaV1). Also shows a delay in fast inactivation when tested on BgNaV1. May act as a gating-modifier toxin on Nav and as a pore blocker on Cav. In vivo, reversibly paralyzes both L.cuprina (Australian sheep blowfly) and M.domestica (housefly), but does not affect larvae of H.armigera (cotton bollworms). The sequence is that of Mu/omega-theraphotoxin-Mb1a from Monocentropus balfouri (Socotra Island blue baboon tarantula).